The chain runs to 241 residues: ATP synthase subunit a (241 aa).

5 helical membrane passes run Gly30–Gly50, Phe91–Trp111, Ile128–Ser148, Leu193–Leu213, and Gly214–Gly234.

The protein belongs to the ATPase A chain family. F-type ATPases have 2 components, CF(1) - the catalytic core - and CF(0) - the membrane proton channel. CF(1) has five subunits: alpha(3), beta(3), gamma(1), delta(1), epsilon(1). CF(0) has four main subunits: a, b, b' and c.

It is found in the cellular thylakoid membrane. In terms of biological role, key component of the proton channel; it plays a direct role in the translocation of protons across the membrane. This chain is ATP synthase subunit a, found in Prochlorococcus marinus (strain MIT 9303).